The sequence spans 236 residues: Small ribosomal subunit protein uS5 (236 aa).

Positions 61 to 124 constitute an S5 DRBM domain; that stretch reads ENQEVLDIAL…NYAKLNIIEI (64 aa).

Belongs to the universal ribosomal protein uS5 family. Part of the 30S ribosomal subunit. Contacts protein S4.

In terms of biological role, with S4 and S12 plays an important role in translational accuracy. The protein is Small ribosomal subunit protein uS5 of Pyrococcus furiosus (strain ATCC 43587 / DSM 3638 / JCM 8422 / Vc1).